Consider the following 247-residue polypeptide: ATP synthase subunit a, chloroplastic (247 aa).

The next 5 helical transmembrane spans lie at 38 to 58, 95 to 115, 134 to 154, 199 to 219, and 220 to 240; these read QVLITSWVVIAILLGSATLAV, VPFIGTMFLFIFVSNWSGALL, INTTVALALLTSVAYFYAGLT, LVVVVLVSLVPSVVPIPVMFL, and GLFTSGIQALIFATLAAAYIG.

It belongs to the ATPase A chain family. F-type ATPases have 2 components, CF(1) - the catalytic core - and CF(0) - the membrane proton channel. CF(1) has five subunits: alpha(3), beta(3), gamma(1), delta(1), epsilon(1). CF(0) has four main subunits: a, b, b' and c.

The protein resides in the plastid. It localises to the chloroplast thylakoid membrane. Functionally, key component of the proton channel; it plays a direct role in the translocation of protons across the membrane. In Guizotia abyssinica (Niger), this protein is ATP synthase subunit a, chloroplastic.